The sequence spans 239 residues: LexA repressor (239 aa).

Residues 26-46 constitute a DNA-binding region (H-T-H motif); the sequence is FDEMKDALDLASKSGIHRLIT. Catalysis depends on for autocatalytic cleavage activity residues Ser-159 and Lys-197.

The protein belongs to the peptidase S24 family. In terms of assembly, homodimer.

The enzyme catalyses Hydrolysis of Ala-|-Gly bond in repressor LexA.. Its function is as follows. Represses a number of genes involved in the response to DNA damage (SOS response), including recA and lexA. In the presence of single-stranded DNA, RecA interacts with LexA causing an autocatalytic cleavage which disrupts the DNA-binding part of LexA, leading to derepression of the SOS regulon and eventually DNA repair. This is LexA repressor from Rhizobium etli (strain ATCC 51251 / DSM 11541 / JCM 21823 / NBRC 15573 / CFN 42).